The sequence spans 383 residues: Inactive serine protease 54 (383 aa).

The signal sequence occupies residues 1 to 20; it reads MAEMRGMLLMLLYISHSSSA. One can recognise a Peptidase S1 domain in the interval 21-258; that stretch reads ICGIQKATIA…YSDWITAKTR (238 aa). Residue N113 is glycosylated (N-linked (GlcNAc...) asparagine). 3 disulfides stabilise this stretch: C154–C216, C185–C195, and C206–C237. Positions 305–334 are disordered; the sequence is QGQRMSTKSNKQKDAGQNFRVNRQPETSGP. Residues 323–334 show a composition bias toward polar residues; that stretch reads FRVNRQPETSGP.

Belongs to the peptidase S1 family. Plasma kallikrein subfamily.

The protein localises to the secreted. The sequence is that of Inactive serine protease 54 (Prss54) from Mus musculus (Mouse).